The primary structure comprises 1818 residues: Cytadherence high molecular weight protein 2 (1818 aa).

4 coiled-coil regions span residues 31–880 (LESA…KQRE), 919–1607 (ELKI…DNKH), 1644–1755 (HLFE…QAVQ), and 1786–1817 (LATQ…QKAA).

Phosphorylated mainly on serine residues.

In terms of biological role, component of the cytoskeleton-like structure which stabilizes the shape of the wall-less Mycoplasma. This cytoskeleton-like network of accessory proteins containing HMW proteins 1 to 5 allows the proper anchoring of cytadhesin proteins in the mycoplasmal membrane at the attachment organelle. The polypeptide is Cytadherence high molecular weight protein 2 (hmw2) (Mycoplasma pneumoniae (strain ATCC 29342 / M129 / Subtype 1) (Mycoplasmoides pneumoniae)).